The primary structure comprises 40 residues: Large ribosomal subunit protein bL33c (40 aa).

Belongs to the bacterial ribosomal protein bL33 family.

The protein localises to the plastid. Its subcellular location is the chloroplast. The sequence is that of Large ribosomal subunit protein bL33c (rpl33) from Pisum sativum (Garden pea).